A 617-amino-acid polypeptide reads, in one-letter code: Zinc metalloproteinase nas-36 (617 aa).

Positions 1–22 (MRLCHSIILFNSLISISICSKA) are cleaved as a signal peptide. Positions 23 to 126 (DDPALLVASE…SKDKTKRLRR (104 aa)) are excised as a propeptide. The region spanning 127–322 (SFVSDKTATW…VATINTAYCK (196 aa)) is the Peptidase M12A domain. Disulfide bonds link Cys169/Cys321, Cys192/Cys211, Cys325/Cys346, Cys348/Cys357, Cys368/Cys397, Cys425/Cys445, Cys519/Cys550, Cys523/Cys555, and Cys535/Cys540. An N-linked (GlcNAc...) asparagine glycan is attached at Asn174. His219 is a binding site for Zn(2+). Glu220 is a catalytic residue. The Zn(2+) site is built by His223 and His229. The EGF-like domain occupies 317 to 358 (NTAYCKDECKSEKTKCENGGYMRPSKCSECLCPDGLGGEKCE). A CUB domain is found at 368–482 (CGGIIKLTEE…IGFKIQAKST (115 aa)). A TSP type-1 domain is found at 507-556 (PNVWADWGEWSMCSRTCGGCGIRSRVRSCRSKKCEGRRQEFGTCNLKACP).

Zn(2+) serves as cofactor. Expressed in hypodermal cells. Also detected in the hypodermal seam cells in L4 larvae and young adults. In old adult hermaphrodites, it localizes to the vulva (at protein level).

Its subcellular location is the secreted. Its function is as follows. Metalloprotease. Involved in molting, a process during larval stages in which a new cuticle is formed and the old cuticle is shed. The protein is Zinc metalloproteinase nas-36 (nas-36) of Caenorhabditis elegans.